Consider the following 876-residue polypeptide: Alanine--tRNA ligase (876 aa).

Positions 564, 568, 666, and 670 each coordinate Zn(2+).

This sequence belongs to the class-II aminoacyl-tRNA synthetase family. Requires Zn(2+) as cofactor.

It is found in the cytoplasm. It carries out the reaction tRNA(Ala) + L-alanine + ATP = L-alanyl-tRNA(Ala) + AMP + diphosphate. Functionally, catalyzes the attachment of alanine to tRNA(Ala) in a two-step reaction: alanine is first activated by ATP to form Ala-AMP and then transferred to the acceptor end of tRNA(Ala). Also edits incorrectly charged Ser-tRNA(Ala) and Gly-tRNA(Ala) via its editing domain. The polypeptide is Alanine--tRNA ligase (Colwellia psychrerythraea (strain 34H / ATCC BAA-681) (Vibrio psychroerythus)).